Consider the following 227-residue polypeptide: Cytochrome c oxidase subunit 2 (227 aa).

The Mitochondrial intermembrane portion of the chain corresponds to 1–14; that stretch reads MAHAAQVGLQDATS. Residues 15–45 traverse the membrane as a helical segment; the sequence is PIMEELIIFHDHALMIIFLICFLVLYALFLT. The Mitochondrial matrix segment spans residues 46–59; the sequence is LTTKLTSTNISDAQ. The helical transmembrane segment at 60 to 87 threads the bilayer; that stretch reads EMETVWTILPAIILVLIALPSLRILYMT. Residues 88 to 227 lie on the Mitochondrial intermembrane side of the membrane; it reads DEINDPSFTI…IFEMGPVFTL (140 aa). The Cu cation site is built by histidine 161, cysteine 196, glutamate 198, cysteine 200, histidine 204, and methionine 207. Glutamate 198 is a binding site for Mg(2+).

The protein belongs to the cytochrome c oxidase subunit 2 family. Component of the cytochrome c oxidase (complex IV, CIV), a multisubunit enzyme composed of 14 subunits. The complex is composed of a catalytic core of 3 subunits MT-CO1, MT-CO2 and MT-CO3, encoded in the mitochondrial DNA, and 11 supernumerary subunits COX4I, COX5A, COX5B, COX6A, COX6B, COX6C, COX7A, COX7B, COX7C, COX8 and NDUFA4, which are encoded in the nuclear genome. The complex exists as a monomer or a dimer and forms supercomplexes (SCs) in the inner mitochondrial membrane with NADH-ubiquinone oxidoreductase (complex I, CI) and ubiquinol-cytochrome c oxidoreductase (cytochrome b-c1 complex, complex III, CIII), resulting in different assemblies (supercomplex SCI(1)III(2)IV(1) and megacomplex MCI(2)III(2)IV(2)). Found in a complex with TMEM177, COA6, COX18, COX20, SCO1 and SCO2. Interacts with TMEM177 in a COX20-dependent manner. Interacts with COX20. Interacts with COX16. Cu cation is required as a cofactor.

Its subcellular location is the mitochondrion inner membrane. The catalysed reaction is 4 Fe(II)-[cytochrome c] + O2 + 8 H(+)(in) = 4 Fe(III)-[cytochrome c] + 2 H2O + 4 H(+)(out). Component of the cytochrome c oxidase, the last enzyme in the mitochondrial electron transport chain which drives oxidative phosphorylation. The respiratory chain contains 3 multisubunit complexes succinate dehydrogenase (complex II, CII), ubiquinol-cytochrome c oxidoreductase (cytochrome b-c1 complex, complex III, CIII) and cytochrome c oxidase (complex IV, CIV), that cooperate to transfer electrons derived from NADH and succinate to molecular oxygen, creating an electrochemical gradient over the inner membrane that drives transmembrane transport and the ATP synthase. Cytochrome c oxidase is the component of the respiratory chain that catalyzes the reduction of oxygen to water. Electrons originating from reduced cytochrome c in the intermembrane space (IMS) are transferred via the dinuclear copper A center (CU(A)) of subunit 2 and heme A of subunit 1 to the active site in subunit 1, a binuclear center (BNC) formed by heme A3 and copper B (CU(B)). The BNC reduces molecular oxygen to 2 water molecules using 4 electrons from cytochrome c in the IMS and 4 protons from the mitochondrial matrix. The sequence is that of Cytochrome c oxidase subunit 2 (MT-CO2) from Gorilla gorilla beringei (Mountain gorilla).